Here is a 149-residue protein sequence, read N- to C-terminus: Large ribosomal subunit protein bL9 (149 aa).

Belongs to the bacterial ribosomal protein bL9 family.

Binds to the 23S rRNA. This is Large ribosomal subunit protein bL9 from Chromobacterium violaceum (strain ATCC 12472 / DSM 30191 / JCM 1249 / CCUG 213 / NBRC 12614 / NCIMB 9131 / NCTC 9757 / MK).